Reading from the N-terminus, the 440-residue chain is Xylose isomerase (440 aa).

Active-site residues include His-101 and Asp-104. Positions 232, 268, 271, 296, 307, 309, and 339 each coordinate Mg(2+).

Belongs to the xylose isomerase family. Homotetramer. Mg(2+) serves as cofactor.

Its subcellular location is the cytoplasm. It carries out the reaction alpha-D-xylose = alpha-D-xylulofuranose. The chain is Xylose isomerase from Enterobacter sp. (strain 638).